The sequence spans 1167 residues: mRNA 3'-end-processing protein rna-14 (1167 aa).

The disordered stretch occupies residues 1–245 (MSDDYDPTNI…DPTPVTQPAP (245 aa)). 2 stretches are compositionally biased toward acidic residues: residues 16–26 (EEQEDYGEADG) and 70–79 (NTDDVGDDYD). Low complexity predominate over residues 102–111 (TAPQPAAPVA). The segment covering 124–137 (DSDDEDEDGDDDGE) has biased composition (acidic residues). Composition is skewed to low complexity over residues 138-150 (PQQQ…QQQP) and 159-191 (GSGA…PQTA). The segment covering 192 to 218 (TLTVQDNAGATTFNAPPVPQQVSHQSG) has biased composition (polar residues). A compositionally biased stretch (low complexity) spans 219–245 (ATTAAVPTTPSSAAPAVDPTPVTQPAP). HAT repeat units lie at residues 277 to 309 (NDID…LELS), 311 to 342 (NNFP…YIRR), 352 to 387 (QARQ…FIKF), 401 to 434 (QKMD…FEMG), 471 to 504 (TNLP…WEKS), and 518 to 550 (LYQK…WCFD). The span at 882 to 893 (QQQPQLPMSQRD) shows a compositional bias: polar residues. 2 disordered regions span residues 882–980 (QQQP…SGAG) and 1075–1167 (AYRE…PPPY). The segment covering 908 to 922 (SPSAGPGAPFAPYAA) has biased composition (low complexity). Residues 924 to 946 (RPLDDRDYDDHPRKIARSEHDPF) are compositionally biased toward basic and acidic residues. A compositionally biased stretch (gly residues) spans 969–979 (GAAGAYSGSGA). Low complexity predominate over residues 1079 to 1090 (SPGPLGGRPLSP). Residues 1121–1134 (EPPPAAQYGVPPPA) are compositionally biased toward pro residues. Residues 1135–1151 (QYDGGWAQQQQQQQYGQ) are compositionally biased toward low complexity.

The protein localises to the nucleus. The protein resides in the cytoplasm. Component of the cleavage factor IA (CFIA) complex, which is involved in the endonucleolytic cleavage during polyadenylation-dependent pre-mRNA 3'-end formation. This Neurospora crassa (strain ATCC 24698 / 74-OR23-1A / CBS 708.71 / DSM 1257 / FGSC 987) protein is mRNA 3'-end-processing protein rna-14 (rna-14).